A 101-amino-acid polypeptide reads, in one-letter code: MTTNNLVLAGTITRSRQFDSPAGIAHTVVMLEHKSQRYEAGMLRNVYCQIQVVLSGEHFNSVSKNLKAGVEIQVEGFINLQQSRNGQNRLVLHAENVELKT.

In terms of domain architecture, SSB spans 1–101; the sequence is MTTNNLVLAG…LHAENVELKT (101 aa).

This sequence belongs to the PriB family. As to quaternary structure, homodimer. Interacts with PriA and DnaT. Component of the replication restart primosome. Primosome assembly occurs via a 'hand-off' mechanism. PriA binds to replication forks, subsequently PriB then DnaT bind; DnaT then displaces ssDNA to generate the helicase loading substrate.

Functionally, involved in the restart of stalled replication forks, which reloads the replicative helicase on sites other than the origin of replication; the PriA-PriB pathway is the major replication restart pathway. During primosome assembly it facilitates complex formation between PriA and DnaT on DNA; stabilizes PriA on DNA. Stimulates the DNA unwinding activity of PriA helicase. This is Replication restart protein PriB from Shewanella halifaxensis (strain HAW-EB4).